We begin with the raw amino-acid sequence, 314 residues long: Probable cell division protein WhiA (314 aa).

The segment at residues 282–314 (SLKELGELCRPPVSKSGAAHRMRQLMALAESLE) is a DNA-binding region (H-T-H motif).

Belongs to the WhiA family.

Involved in cell division and chromosome segregation. This Symbiobacterium thermophilum (strain DSM 24528 / JCM 14929 / IAM 14863 / T) protein is Probable cell division protein WhiA.